Reading from the N-terminus, the 350-residue chain is Dihydroorotase (350 aa).

Zn(2+) contacts are provided by His13 and His15. Substrate is bound by residues 15–17 (HLR) and Asn41. Residues Lys99, His136, and His174 each coordinate Zn(2+). N6-carboxylysine is present on Lys99. His136 serves as a coordination point for substrate. A substrate-binding site is contributed by Leu219. Residue Asp247 participates in Zn(2+) binding. Residue Asp247 is part of the active site. Substrate is bound by residues His251 and Ala263.

The protein belongs to the metallo-dependent hydrolases superfamily. DHOase family. Class II DHOase subfamily. In terms of assembly, homodimer. The cofactor is Zn(2+).

It carries out the reaction (S)-dihydroorotate + H2O = N-carbamoyl-L-aspartate + H(+). It functions in the pathway pyrimidine metabolism; UMP biosynthesis via de novo pathway; (S)-dihydroorotate from bicarbonate: step 3/3. Its function is as follows. Catalyzes the reversible cyclization of carbamoyl aspartate to dihydroorotate. The sequence is that of Dihydroorotase from Allorhizobium ampelinum (strain ATCC BAA-846 / DSM 112012 / S4) (Agrobacterium vitis (strain S4)).